A 422-amino-acid chain; its full sequence is Gamma-glutamyl phosphate reductase (422 aa).

The protein belongs to the gamma-glutamyl phosphate reductase family.

The protein localises to the cytoplasm. It catalyses the reaction L-glutamate 5-semialdehyde + phosphate + NADP(+) = L-glutamyl 5-phosphate + NADPH + H(+). Its pathway is amino-acid biosynthesis; L-proline biosynthesis; L-glutamate 5-semialdehyde from L-glutamate: step 2/2. Its function is as follows. Catalyzes the NADPH-dependent reduction of L-glutamate 5-phosphate into L-glutamate 5-semialdehyde and phosphate. The product spontaneously undergoes cyclization to form 1-pyrroline-5-carboxylate. The polypeptide is Gamma-glutamyl phosphate reductase (Chloroflexus aurantiacus (strain ATCC 29366 / DSM 635 / J-10-fl)).